Consider the following 173-residue polypeptide: Insertion element IS1397 uncharacterized 20.1 kDa protein (173 aa).

Residues 115-135 (KSMTRSDDTHENEANMTPEEM) form a disordered region.

This sequence belongs to the IS150/IS1296 orfA family.

This chain is Insertion element IS1397 uncharacterized 20.1 kDa protein, found in Escherichia coli.